The primary structure comprises 261 residues: Indole-3-glycerol phosphate synthase (261 aa).

Belongs to the TrpC family.

It catalyses the reaction 1-(2-carboxyphenylamino)-1-deoxy-D-ribulose 5-phosphate + H(+) = (1S,2R)-1-C-(indol-3-yl)glycerol 3-phosphate + CO2 + H2O. It functions in the pathway amino-acid biosynthesis; L-tryptophan biosynthesis; L-tryptophan from chorismate: step 4/5. The polypeptide is Indole-3-glycerol phosphate synthase (Campylobacter curvus (strain 525.92)).